A 397-amino-acid polypeptide reads, in one-letter code: Serpin B10 (397 aa).

The interval Arg62–Ser85 is disordered. A compositionally biased stretch (basic and acidic residues) spans Pro70 to Glu79. Residues Lys74 to Lys77 carry the Nuclear localization signal motif.

The protein belongs to the serpin family. Ov-serpin subfamily.

It localises to the nucleus. Its subcellular location is the cytoplasm. Protease inhibitor that may play a role in the regulation of protease activities during hematopoiesis and apoptosis induced by TNF. May regulate protease activities in the cytoplasm and in the nucleus. The sequence is that of Serpin B10 (SERPINB10) from Papio anubis (Olive baboon).